The primary structure comprises 119 residues: Flagellar transcriptional regulator FlhD (119 aa).

Belongs to the FlhD family. Homodimer; disulfide-linked. Forms a heterohexamer composed of two FlhC and four FlhD subunits. Each FlhC binds a FlhD dimer, forming a heterotrimer, and a hexamer assembles by dimerization of two heterotrimers.

Its subcellular location is the cytoplasm. In terms of biological role, functions in complex with FlhC as a master transcriptional regulator that regulates transcription of several flagellar and non-flagellar operons by binding to their promoter region. Activates expression of class 2 flagellar genes, including fliA, which is a flagellum-specific sigma factor that turns on the class 3 genes. Also regulates genes whose products function in a variety of physiological pathways. The protein is Flagellar transcriptional regulator FlhD of Yersinia enterocolitica.